The primary structure comprises 257 residues: 3-methyl-2-oxobutanoate hydroxymethyltransferase (257 aa).

Residues aspartate 42 and aspartate 86 each coordinate Mg(2+). 3-methyl-2-oxobutanoate-binding positions include 42–43 (DS), aspartate 86, and lysine 116. Glutamate 118 is a Mg(2+) binding site. The Proton acceptor role is filled by glutamate 185.

The protein belongs to the PanB family. Homodecamer; pentamer of dimers. It depends on Mg(2+) as a cofactor.

The protein resides in the cytoplasm. The enzyme catalyses 3-methyl-2-oxobutanoate + (6R)-5,10-methylene-5,6,7,8-tetrahydrofolate + H2O = 2-dehydropantoate + (6S)-5,6,7,8-tetrahydrofolate. Its pathway is cofactor biosynthesis; (R)-pantothenate biosynthesis; (R)-pantoate from 3-methyl-2-oxobutanoate: step 1/2. Catalyzes the reversible reaction in which hydroxymethyl group from 5,10-methylenetetrahydrofolate is transferred onto alpha-ketoisovalerate to form ketopantoate. This chain is 3-methyl-2-oxobutanoate hydroxymethyltransferase, found in Prochlorococcus marinus (strain AS9601).